Consider the following 170-residue polypeptide: Cyclic dof factor 4 (170 aa).

Residues 25–51 (NEEETHPPEQEATIAVRSSSSSDLTAE) are disordered. A Dof-type zinc finger spans residues 58 to 112 (IACPRCKSMETKFCYFNNYNVNQPRHFCKGCHRYWTAGGALRNVPVGAGRRKSKP). Cys60, Cys63, Cys85, and Cys88 together coordinate Zn(2+).

In terms of tissue distribution, expressed in the vasculature of cotyledons and hypocotyls, leaves and roots.

It is found in the nucleus. Its function is as follows. Transcription factor that binds specifically to a 5'-AA[AG]G-3' consensus core sequence. Transcriptional repressor of 'CONSTANS' expression. Regulates a photoperiodic flowering response. This is Cyclic dof factor 4 (CDF4) from Arabidopsis thaliana (Mouse-ear cress).